Reading from the N-terminus, the 67-residue chain is ATP synthase F(0) complex subunit 8 (67 aa).

Residues 8 to 24 (TWFTVILSMIISLFMLL) form a helical membrane-spanning segment. K54 carries the N6-acetyllysine; alternate modification. K54 carries the post-translational modification N6-succinyllysine; alternate. The residue at position 57 (K57) is an N6-acetyllysine.

The protein belongs to the ATPase protein 8 family. As to quaternary structure, component of the ATP synthase complex composed at least of ATP5F1A/subunit alpha, ATP5F1B/subunit beta, ATP5MC1/subunit c (homooctomer), MT-ATP6/subunit a, MT-ATP8/subunit 8, ATP5ME/subunit e, ATP5MF/subunit f, ATP5MG/subunit g, ATP5MK/subunit k, ATP5MJ/subunit j, ATP5F1C/subunit gamma, ATP5F1D/subunit delta, ATP5F1E/subunit epsilon, ATP5PF/subunit F6, ATP5PB/subunit b, ATP5PD/subunit d, ATP5PO/subunit OSCP. ATP synthase complex consists of a soluble F(1) head domain (subunits alpha(3) and beta(3)) - the catalytic core - and a membrane F(0) domain - the membrane proton channel (subunits c, a, 8, e, f, g, k and j). These two domains are linked by a central stalk (subunits gamma, delta, and epsilon) rotating inside the F1 region and a stationary peripheral stalk (subunits F6, b, d, and OSCP). Interacts with PRICKLE3.

It localises to the mitochondrion membrane. Its function is as follows. Subunit 8, of the mitochondrial membrane ATP synthase complex (F(1)F(0) ATP synthase or Complex V) that produces ATP from ADP in the presence of a proton gradient across the membrane which is generated by electron transport complexes of the respiratory chain. ATP synthase complex consist of a soluble F(1) head domain - the catalytic core - and a membrane F(1) domain - the membrane proton channel. These two domains are linked by a central stalk rotating inside the F(1) region and a stationary peripheral stalk. During catalysis, ATP synthesis in the catalytic domain of F(1) is coupled via a rotary mechanism of the central stalk subunits to proton translocation. In vivo, can only synthesize ATP although its ATP hydrolase activity can be activated artificially in vitro. Part of the complex F(0) domain. The chain is ATP synthase F(0) complex subunit 8 from Cavia porcellus (Guinea pig).